A 314-amino-acid polypeptide reads, in one-letter code: MQIKLANPRGFCAGVDRAIEIVNRALDVFGPPIYVRHEVVHNKFVVDNLRQRGAIFVEELDQVPNNVIVIFSAHGVSQAVRKEAEGRGLKVFDATCPLVTKVHMEVVRYSRDGHECVLIGHEGHPEVEGTMGQYDASNGGAIYLVEDEADVAALEVRKPEALHYVTQTTLSMDDTSKVIDALRAKFPQIQGPRKNDICYATQNRQDAVKELADQCDMVLVVGSPNSSNSNRLRELAERMGTPAYLIDGAEDMQRGWFDGVRRIGITAGASAPEVLVRGVIAQLREWGASEEQELEGREENITFSMPKELRVKAL.

[4Fe-4S] cluster is bound at residue cysteine 12. Residues histidine 41 and histidine 74 each contribute to the (2E)-4-hydroxy-3-methylbut-2-enyl diphosphate site. Dimethylallyl diphosphate contacts are provided by histidine 41 and histidine 74. Histidine 41 and histidine 74 together coordinate isopentenyl diphosphate. Cysteine 96 provides a ligand contact to [4Fe-4S] cluster. Histidine 124 serves as a coordination point for (2E)-4-hydroxy-3-methylbut-2-enyl diphosphate. Histidine 124 contributes to the dimethylallyl diphosphate binding site. Isopentenyl diphosphate is bound at residue histidine 124. The active-site Proton donor is the glutamate 126. Threonine 168 contacts (2E)-4-hydroxy-3-methylbut-2-enyl diphosphate. Cysteine 198 lines the [4Fe-4S] cluster pocket. (2E)-4-hydroxy-3-methylbut-2-enyl diphosphate contacts are provided by serine 226, serine 227, asparagine 228, and serine 270. Dimethylallyl diphosphate-binding residues include serine 226, serine 227, asparagine 228, and serine 270. Isopentenyl diphosphate is bound by residues serine 226, serine 227, asparagine 228, and serine 270.

This sequence belongs to the IspH family. [4Fe-4S] cluster is required as a cofactor.

It catalyses the reaction isopentenyl diphosphate + 2 oxidized [2Fe-2S]-[ferredoxin] + H2O = (2E)-4-hydroxy-3-methylbut-2-enyl diphosphate + 2 reduced [2Fe-2S]-[ferredoxin] + 2 H(+). It carries out the reaction dimethylallyl diphosphate + 2 oxidized [2Fe-2S]-[ferredoxin] + H2O = (2E)-4-hydroxy-3-methylbut-2-enyl diphosphate + 2 reduced [2Fe-2S]-[ferredoxin] + 2 H(+). The protein operates within isoprenoid biosynthesis; dimethylallyl diphosphate biosynthesis; dimethylallyl diphosphate from (2E)-4-hydroxy-3-methylbutenyl diphosphate: step 1/1. Its pathway is isoprenoid biosynthesis; isopentenyl diphosphate biosynthesis via DXP pathway; isopentenyl diphosphate from 1-deoxy-D-xylulose 5-phosphate: step 6/6. Its function is as follows. Catalyzes the conversion of 1-hydroxy-2-methyl-2-(E)-butenyl 4-diphosphate (HMBPP) into a mixture of isopentenyl diphosphate (IPP) and dimethylallyl diphosphate (DMAPP). Acts in the terminal step of the DOXP/MEP pathway for isoprenoid precursor biosynthesis. The chain is 4-hydroxy-3-methylbut-2-enyl diphosphate reductase from Pseudomonas aeruginosa (strain ATCC 15692 / DSM 22644 / CIP 104116 / JCM 14847 / LMG 12228 / 1C / PRS 101 / PAO1).